The following is a 409-amino-acid chain: Argininosuccinate synthase (409 aa).

ATP-binding positions include 11 to 19 (AYSGGLDTS) and Ala38. Residues Tyr91 and Ser96 each coordinate L-citrulline. Residue Gly121 participates in ATP binding. Residues Thr123, Asn127, and Asp128 each contribute to the L-aspartate site. Residue Asn127 participates in L-citrulline binding. Positions 131, 182, 191, 267, and 279 each coordinate L-citrulline.

It belongs to the argininosuccinate synthase family. Type 1 subfamily. As to quaternary structure, homotetramer.

The protein resides in the cytoplasm. It carries out the reaction L-citrulline + L-aspartate + ATP = 2-(N(omega)-L-arginino)succinate + AMP + diphosphate + H(+). It functions in the pathway amino-acid biosynthesis; L-arginine biosynthesis; L-arginine from L-ornithine and carbamoyl phosphate: step 2/3. In Nitrobacter winogradskyi (strain ATCC 25391 / DSM 10237 / CIP 104748 / NCIMB 11846 / Nb-255), this protein is Argininosuccinate synthase.